Reading from the N-terminus, the 288-residue chain is Shikimate kinase (288 aa).

Position 81–91 (81–91) interacts with ATP; the sequence is PVASGLKSSSA.

It belongs to the GHMP kinase family. Archaeal shikimate kinase subfamily.

The protein localises to the cytoplasm. The enzyme catalyses shikimate + ATP = 3-phosphoshikimate + ADP + H(+). It participates in metabolic intermediate biosynthesis; chorismate biosynthesis; chorismate from D-erythrose 4-phosphate and phosphoenolpyruvate: step 5/7. In Methanothrix thermoacetophila (strain DSM 6194 / JCM 14653 / NBRC 101360 / PT) (Methanosaeta thermophila), this protein is Shikimate kinase.